Reading from the N-terminus, the 248-residue chain is Transcription factor MYB1 (248 aa).

2 HTH myb-type domains span residues 9–61 (KEGM…LNYL) and 62–116 (RPGI…GRRV). 2 DNA-binding regions (H-T-H motif) span residues 37 to 61 (WRSL…LNYL) and 89 to 112 (WSLI…NTNL). Positions 118 to 144 (DQSHQHCRPNPTITSTKPADAPPANAN) are disordered.

The protein resides in the nucleus. In terms of biological role, transcription activator involved in the spatiotemporal regulation of flavonoid biosynthesis specifically in the corms of Montbretia. Activates the promoters of enzymes involved in the biosynthesis of the flavonol kaempferol and the flavonol-glycoside kaempferol-rhamnoside. This chain is Transcription factor MYB1, found in Crocosmia x crocosmiiflora (Montbretia).